The following is a 123-amino-acid chain: Large ribosomal subunit protein bL12 (123 aa).

This sequence belongs to the bacterial ribosomal protein bL12 family. As to quaternary structure, homodimer. Part of the ribosomal stalk of the 50S ribosomal subunit. Forms a multimeric L10(L12)X complex, where L10 forms an elongated spine to which 2 to 4 L12 dimers bind in a sequential fashion. Binds GTP-bound translation factors.

In terms of biological role, forms part of the ribosomal stalk which helps the ribosome interact with GTP-bound translation factors. Is thus essential for accurate translation. In Shewanella sp. (strain ANA-3), this protein is Large ribosomal subunit protein bL12.